We begin with the raw amino-acid sequence, 207 residues long: Putative zinc finger protein 137 (207 aa).

Residues 72–94 (CKCNDCHKVFSNATTIANHWRIH) form a C2H2-type 1 zinc finger. The C2H2-type 2; degenerate zinc-finger motif lies at 100–122 (YKCNKCGKIFRHRSYLAVYQRTH). A C2H2-type 3; degenerate zinc finger spans residues 128-150 (YKYHDCGKVFSQASSYAKHRRIH). 2 consecutive C2H2-type zinc fingers follow at residues 156–178 (HKCDDCGKVLTSRSHLIRHQRIH) and 184–206 (YKCLKCGKVFSLWALHAEHQKIH).

It belongs to the krueppel C2H2-type zinc-finger protein family.

The protein resides in the nucleus. May be involved in transcriptional regulation. The protein is Putative zinc finger protein 137 (ZNF137P) of Homo sapiens (Human).